The following is a 384-amino-acid chain: MEEQDILNELRKYRSQDLKYEEGYILGSMCTKPHPIARKISEMFFETNLGDPGLFNGTSKLEKEVVSMLGSILHNNNAFGYIISGGTEANLTAMRAFKNISKSKDKKQNIIIPETAHFSFDKARDMMDLNVVRPPLTEYFTMDVKFIRDYVEDSKNEISGIVGIAGCTELGSIDNIYELSKIAVENDILLHVDAAFGGFVIPFLDDKYKLKGYNYDFDFSLNGVSSITIDPHKMGLAPISAGGILFRDNTFKKYLDVDAPYLTEKQQATLIGTRSGVGVASTWGIMKLLGIEGYENLVNESMEKTKHLVKKAREYGFETAIDPVMNIVALKDENKQDTCMKLREENWYVSVCRCVEALRIVVMPHLEIEHIDGFLESLSNTKKY.

Residue K233 is modified to N6-(pyridoxal phosphate)lysine.

The protein belongs to the group II decarboxylase family. MfnA subfamily. The cofactor is pyridoxal 5'-phosphate.

The catalysed reaction is L-tyrosine + H(+) = tyramine + CO2. The enzyme catalyses L-aspartate + H(+) = beta-alanine + CO2. Its pathway is cofactor biosynthesis; methanofuran biosynthesis. It participates in cofactor biosynthesis; coenzyme A biosynthesis. Its function is as follows. Catalyzes the decarboxylation of L-tyrosine to produce tyramine for methanofuran biosynthesis. Can also catalyze the decarboxylation of L-aspartate to produce beta-alanine for coenzyme A (CoA) biosynthesis. This chain is Probable L-tyrosine/L-aspartate decarboxylase, found in Methanococcus maripaludis (strain C5 / ATCC BAA-1333).